The following is an 898-amino-acid chain: Serine/threonine-protein kinase PKH3 (898 aa).

The 283-residue stretch at F11–F293 folds into the Protein kinase domain. Residues L17–V25 and K41 contribute to the ATP site. D138 functions as the Proton acceptor in the catalytic mechanism. 2 disordered regions span residues P435 to E484 and D675 to S850. The span at P459–K468 shows a compositional bias: polar residues. A compositionally biased stretch (low complexity) spans L469–T483. S696 carries the post-translational modification Phosphoserine. Residues I697–N721 show a composition bias toward polar residues. A compositionally biased stretch (basic and acidic residues) spans G723–P738. 3 stretches are compositionally biased toward polar residues: residues A740–G758, S771–S782, and R789–T803. A Phosphoserine modification is found at S753. Over residues S804 to S817 the composition is skewed to low complexity. The segment covering T818–P831 has biased composition (polar residues). S871 carries the post-translational modification Phosphoserine.

This sequence belongs to the protein kinase superfamily. Ser/Thr protein kinase family.

The catalysed reaction is L-seryl-[protein] + ATP = O-phospho-L-seryl-[protein] + ADP + H(+). It catalyses the reaction L-threonyl-[protein] + ATP = O-phospho-L-threonyl-[protein] + ADP + H(+). Its function is as follows. Serine/threonine-protein kinase which may phosphorylate the same targets substrates as PKH1 and PKH2, 2 upstream activators of PKC1. The protein is Serine/threonine-protein kinase PKH3 (PKH3) of Saccharomyces cerevisiae (strain ATCC 204508 / S288c) (Baker's yeast).